A 406-amino-acid polypeptide reads, in one-letter code: 5-hydroxytryptamine receptor 4 (406 aa).

Topologically, residues 1–19 are extracellular; that stretch reads MDRLDANVSSNEGFGSVEK. N-linked (GlcNAc...) asparagine glycosylation occurs at Asn7. A helical membrane pass occupies residues 20 to 44; sequence VVLLTFFAMVILMAILGNLLVMVAV. Residues 45 to 54 lie on the Cytoplasmic side of the membrane; sequence CRDRQLRKIK. The chain crosses the membrane as a helical span at residues 55–78; sequence TNYFIVSLAFADLLVSVLVNAFGA. Over 79–92 the chain is Extracellular; it reads IELVQDIWFYGEMF. Residues 93 to 117 form a helical membrane-spanning segment; it reads CLVRTSLDVLLTTASIFHLCCISLD. Cysteines 93 and 184 form a disulfide. Residue Asp100 coordinates serotonin. The Cytoplasmic segment spans residues 118-133; that stretch reads RYYAICCQPLVYRNKM. The chain crosses the membrane as a helical span at residues 134–157; that stretch reads TPLRIALMLGGCWVIPMFISFLPI. The Extracellular portion of the chain corresponds to 158–188; it reads MQGWNNIGIVDVIEKRKFNHNSNSTFCVFMV. The helical transmembrane segment at 189–212 threads the bilayer; it reads NKPYAITCSVVAFYIPFLLMVLAY. Residues 213 to 257 are Cytoplasmic-facing; it reads YRIYVTAKEHAQQIQMLQRAGATSESRPQTADQHSTHRMRTETKA. The chain crosses the membrane as a helical span at residues 258–283; the sequence is AKTLCVIMGCFCFCWAPFFVTNIVDP. Residue Asn279 participates in serotonin binding. At 284 to 290 the chain is on the extracellular side; the sequence is FIDYTVP. Residues 291 to 314 form a helical membrane-spanning segment; that stretch reads EKVWTAFLWLGYINSGLNPFLYAF. Residues 315 to 406 lie on the Cytoplasmic side of the membrane; that stretch reads LNKSFRRAFL…DSCSLKRSQS (92 aa).

The protein belongs to the G-protein coupled receptor 1 family. In terms of assembly, interacts (via C-terminus 330-346 AA) with GRK5; this interaction is promoted by 5-HT (serotonin). As to expression, in brain, isoform 5-HT4S is restricted to the striatum. In peripheral tissues, differential expression is also observed in the atrium of the heart where only isoform 5-HT4S is detectable. In brain, isoform 5-HT4L is expressed throughout the brain, except in the cerebellum.

Its subcellular location is the cell membrane. It is found in the endosome membrane. Functionally, G-protein coupled receptor for 5-hydroxytryptamine (serotonin), a biogenic hormone that functions as a neurotransmitter, a hormone and a mitogen. Ligand binding causes a conformation change that triggers signaling via guanine nucleotide-binding proteins (G proteins) and modulates the activity of downstream effectors. HTR4 is coupled to G(s) G alpha proteins and mediates activation of adenylate cyclase activity. This Rattus norvegicus (Rat) protein is 5-hydroxytryptamine receptor 4 (Htr4).